The sequence spans 257 residues: Short chain dehydrogenase prhI (257 aa).

The chain crosses the membrane as a helical span at residues His-7 to Ser-29. Ile-11 is a binding site for NADP(+). Asn-50 carries N-linked (GlcNAc...) asparagine glycosylation. Asp-57 is a binding site for NADP(+). Residues Asn-92 and Asn-110 are each glycosylated (N-linked (GlcNAc...) asparagine). Arg-119, Tyr-151, Lys-155, and Val-184 together coordinate NADP(+). Catalysis depends on Tyr-151, which acts as the Proton acceptor. Lys-155 serves as the catalytic Lowers pKa of active site Tyr.

The protein belongs to the short-chain dehydrogenases/reductases (SDR) family.

It localises to the membrane. It carries out the reaction protoaustinoid A + A = protoaustinoid B + AH2. It functions in the pathway secondary metabolite biosynthesis; terpenoid biosynthesis. Its function is as follows. Short chain dehydrogenase; part of the gene cluster that mediates the biosynthesis of paraherquonin, a meroterpenoid with a unique, highly congested hexacyclic molecular architecture. The first step of the pathway is the synthesis of 3,5-dimethylorsellinic acid (DMOA) by the polyketide synthase prhL. Synthesis of DMOA is followed by farnesylation by the prenyltransferase prhE, methylesterification by the methyl-transferase prhM, epoxidation of the prenyl chain by the flavin-dependent monooxygenase prhF, and cyclization of the farnesyl moiety by the terpene cyclase prhH, to yield the tetracyclic intermediate, protoaustinoid A. The short chain dehydrogenase prhI then oxidizes the C-3 alcohol group of the terpene cyclase product to transform protoaustinoid A into protoaustinoid B. The FAD-binding monooxygenase prhJ catalyzes the oxidation of protoaustinoid B into preaustinoid A which is further oxidized into preaustinoid A1 by FAD-binding monooxygenase phrK. Finally, prhA leads to berkeleydione via the berkeleyone B intermediate. PrhA is a multifunctional dioxygenase that first desaturates at C5-C6 to form berkeleyone B, followed by rearrangement of the A/B-ring to form the cycloheptadiene moiety in berkeleydione. Berkeleydione serves as the key intermediate for the biosynthesis of paraherquonin as well as many other meroterpenoids. The cytochrome P450 monooxygenases prhB, prhD, and prhN, as well as the isomerase prhC, are probably involved in the late stage of paraherquonin biosynthesis, after the production of berkeleydione. Especially prhC might be a multifunctional enzyme that catalyzes the D-ring expansion via intramolecular methoxy rearrangement, as well as the hydrolysis of the expanded D-ring. The polypeptide is Short chain dehydrogenase prhI (Penicillium brasilianum).